We begin with the raw amino-acid sequence, 202 residues long: Small ribosomal subunit protein uS4 (202 aa).

Positions 1–13 (MSRYRGPRLRVTR) are enriched in basic residues. A disordered region spans residues 1 to 42 (MSRYRGPRLRVTRRLGELPGLTRKASKKSNPPGQHGQARRKR). Positions 90–152 (NRLDNVCFRL…KASKKLVEGN (63 aa)) constitute an S4 RNA-binding domain.

This sequence belongs to the universal ribosomal protein uS4 family. Part of the 30S ribosomal subunit. Contacts protein S5. The interaction surface between S4 and S5 is involved in control of translational fidelity.

Functionally, one of the primary rRNA binding proteins, it binds directly to 16S rRNA where it nucleates assembly of the body of the 30S subunit. Its function is as follows. With S5 and S12 plays an important role in translational accuracy. This Prochlorococcus marinus (strain AS9601) protein is Small ribosomal subunit protein uS4.